The primary structure comprises 372 residues: Putative glutamate--cysteine ligase 2 (372 aa).

This sequence belongs to the glutamate--cysteine ligase type 2 family. YbdK subfamily. As to quaternary structure, homodimer.

The enzyme catalyses L-cysteine + L-glutamate + ATP = gamma-L-glutamyl-L-cysteine + ADP + phosphate + H(+). Its function is as follows. ATP-dependent carboxylate-amine ligase which exhibits weak glutamate--cysteine ligase activity. The protein is Putative glutamate--cysteine ligase 2 (ybdK) of Salmonella arizonae (strain ATCC BAA-731 / CDC346-86 / RSK2980).